The sequence spans 64 residues: RLALPPGAVCNGHKSDCQCFGAKYKCSCPFFWRFRKSAECHCKKGWAWTAIKKRSCHNRYQWSD.

4 cysteine pairs are disulfide-bonded: Cys-10–Cys-26, Cys-17–Cys-56, Cys-19–Cys-42, and Cys-28–Cys-40.

It belongs to the neurotoxin 04 (omega-agtx) family. 01 (type I omega-agtx) subfamily. As to expression, expressed by the venom gland.

It is found in the secreted. Functionally, insecticidal to house crickets. It induces an excitatory slow-onset impact that leads to irreversible spastic paralysis. It also modifies human voltage-gated potassium channel Kv1.5/KCNA5. Most likely, it binds to the voltage-sensing domain of the channel, suggesting it does not block the pore but prevents its opening at physiological membrane potentials. The recombinant peptide binds to the channel in an irreversible manner and slows down the hKv1.5 current activation kinetics. It is not toxic to mice, when intracranially injected (at 0.5 ug/g mouse). In Oculicosa supermirabilis (Central Asian wolf-spider), this protein is Kappa-lycotoxin-Os1a.